Here is a 585-residue protein sequence, read N- to C-terminus: A-type ATP synthase subunit A (585 aa).

Glycine 235 to threonine 242 is an ATP binding site.

This sequence belongs to the ATPase alpha/beta chains family. Has multiple subunits with at least A(3), B(3), C, D, E, F, H, I and proteolipid K(x).

The protein localises to the cell membrane. It carries out the reaction ATP + H2O + 4 H(+)(in) = ADP + phosphate + 5 H(+)(out). Its function is as follows. Component of the A-type ATP synthase that produces ATP from ADP in the presence of a proton gradient across the membrane. The A chain is the catalytic subunit. The protein is A-type ATP synthase subunit A of Halobacterium salinarum (strain ATCC 29341 / DSM 671 / R1).